The primary structure comprises 113 residues: Mitochondrial import inner membrane translocase subunit PAM16 like 1 (113 aa).

The N-terminal 48 residues, 1–48 (MAARVLASVIVMGSGIIARACTQAYRQALANASKTGVAHEATQTIKRG), are a transit peptide targeting the mitochondrion. The tract at residues 55–104 (EARQILGVTEKSSWDEILKKYDTLFERNAQNGSFYLQSKVHRAKECLETA) is J-like.

This sequence belongs to the TIM16/PAM16 family. As to expression, expressed at low levels in seedlings, rosettes and inflorescence.

The protein resides in the mitochondrion inner membrane. Functionally, regulates ATP-dependent protein translocation into the mitochondrial matrix. The protein is Mitochondrial import inner membrane translocase subunit PAM16 like 1 of Arabidopsis thaliana (Mouse-ear cress).